A 462-amino-acid chain; its full sequence is L-seryl-tRNA(Sec) selenium transferase (462 aa).

Residue Lys292 is modified to N6-(pyridoxal phosphate)lysine.

This sequence belongs to the SelA family. Pyridoxal 5'-phosphate serves as cofactor.

The protein localises to the cytoplasm. It carries out the reaction L-seryl-tRNA(Sec) + selenophosphate + H(+) = L-selenocysteinyl-tRNA(Sec) + phosphate. It participates in aminoacyl-tRNA biosynthesis; selenocysteinyl-tRNA(Sec) biosynthesis; selenocysteinyl-tRNA(Sec) from L-seryl-tRNA(Sec) (bacterial route): step 1/1. In terms of biological role, converts seryl-tRNA(Sec) to selenocysteinyl-tRNA(Sec) required for selenoprotein biosynthesis. This is L-seryl-tRNA(Sec) selenium transferase from Clostridium perfringens (strain ATCC 13124 / DSM 756 / JCM 1290 / NCIMB 6125 / NCTC 8237 / Type A).